Consider the following 269-residue polypeptide: Dynein regulatory complex protein 8 (269 aa).

The segment at methionine 1–serine 113 is disordered. The segment covering alanine 54 to alanine 76 has biased composition (low complexity). EF-hand domains lie at glutamate 150 to cysteine 185 and isoleucine 228 to valine 263.

This sequence belongs to the DRC8 family. In terms of assembly, component of the nexin-dynein regulatory complex (N-DRC).

The protein localises to the cytoplasm. The protein resides in the cytoskeleton. Its subcellular location is the flagellum axoneme. Component of the nexin-dynein regulatory complex (N-DRC), a key regulator of ciliary/flagellar motility which maintains the alignment and integrity of the distal axoneme and regulates microtubule sliding in motile axonemes. The sequence is that of Dynein regulatory complex protein 8 (EFCAB2) from Homo sapiens (Human).